Here is a 154-residue protein sequence, read N- to C-terminus: NADPH-dependent 7-cyano-7-deazaguanine reductase (154 aa).

Positions 1–13 (MSVTDVSGLSQLG) are enriched in polar residues. Positions 1–30 (MSVTDVSGLSQLGTKVDTPESPEKAVLEKV) are disordered. The span at 17–27 (DTPESPEKAVL) shows a compositional bias: basic and acidic residues. Cysteine 52 serves as the catalytic Thioimide intermediate. Aspartate 59 serves as the catalytic Proton donor. Residues 74-76 (VES) and 93-94 (HE) contribute to the substrate site.

It belongs to the GTP cyclohydrolase I family. QueF type 1 subfamily.

Its subcellular location is the cytoplasm. The catalysed reaction is 7-aminomethyl-7-carbaguanine + 2 NADP(+) = 7-cyano-7-deazaguanine + 2 NADPH + 3 H(+). It functions in the pathway tRNA modification; tRNA-queuosine biosynthesis. Catalyzes the NADPH-dependent reduction of 7-cyano-7-deazaguanine (preQ0) to 7-aminomethyl-7-deazaguanine (preQ1). This is NADPH-dependent 7-cyano-7-deazaguanine reductase from Agrobacterium fabrum (strain C58 / ATCC 33970) (Agrobacterium tumefaciens (strain C58)).